The sequence spans 111 residues: Holo-[acyl-carrier-protein] synthase (111 aa).

Residues D8 and E57 each contribute to the Mg(2+) site.

It belongs to the P-Pant transferase superfamily. AcpS family. The cofactor is Mg(2+).

It localises to the cytoplasm. The enzyme catalyses apo-[ACP] + CoA = holo-[ACP] + adenosine 3',5'-bisphosphate + H(+). Functionally, transfers the 4'-phosphopantetheine moiety from coenzyme A to a Ser of acyl-carrier-protein. This Mycoplasmoides gallisepticum (strain R(low / passage 15 / clone 2)) (Mycoplasma gallisepticum) protein is Holo-[acyl-carrier-protein] synthase.